We begin with the raw amino-acid sequence, 474 residues long: Trigger factor (474 aa).

Positions glycine 165–leucine 250 constitute a PPIase FKBP-type domain. Residues valine 451–lysine 467 show a composition bias toward basic and acidic residues. The tract at residues valine 451 to valine 474 is disordered.

Belongs to the FKBP-type PPIase family. Tig subfamily.

The protein resides in the cytoplasm. It catalyses the reaction [protein]-peptidylproline (omega=180) = [protein]-peptidylproline (omega=0). Its function is as follows. Involved in protein export. Acts as a chaperone by maintaining the newly synthesized protein in an open conformation. Functions as a peptidyl-prolyl cis-trans isomerase. The sequence is that of Trigger factor from Bartonella bacilliformis (strain ATCC 35685 / KC583 / Herrer 020/F12,63).